The sequence spans 161 residues: Probable calcium-binding protein CML16 (161 aa).

EF-hand domains are found at residues 8–43 (DQIKQLKDIFARFDMDKDGSLTQLELAALLRSLGIK), 44–79 (PRGDQISLLLNQIDRNGNGSVEFDELVVAILPDINE), 83–118 (INQEQLMEVFRSFDRDGNGSITAAELAGSMAKMGHP), and 119–154 (LTYRELTEMMTEADSNGDGVISFNEFSHIMAKSAAD). The Ca(2+) site is built by D21, D23, D25, S27, E32, D57, N59, N61, S63, E68, D96, D98, N100, S102, E107, D132, N134, D136, and E143.

Potential calcium sensor. The protein is Probable calcium-binding protein CML16 (CML16) of Arabidopsis thaliana (Mouse-ear cress).